Here is an 886-residue protein sequence, read N- to C-terminus: Receptor-like kinase TMK2 (886 aa).

The first 20 residues, 1–20 (MIAKNFLLLLCFIALVNVES), serve as a signal peptide directing secretion. Over 21–460 (SPDEAVMIAL…GKKASSNAGK (440 aa)) the chain is Extracellular. Residue Asn41 is glycosylated (N-linked (GlcNAc...) asparagine). Residues Cys48 and Cys56 are joined by a disulfide bond. 10 LRR repeats span residues 59-83 (SNRV…LGKL), 84-106 (TSLT…LAGL), 107-129 (KSLV…FFSG), 131-155 (SSLQ…LENA), 157-179 (SLVD…LFEG), 182-206 (FSSL…FSDS), 208-232 (VQVL…LQKM), 233-254 (TSLT…DFSG), 255-279 (LVSL…LFEL), and 281-302 (SLSD…FTAP). 3 N-linked (GlcNAc...) asparagine glycosylation sites follow: Asn154, Asn167, and Asn202. An N-linked (GlcNAc...) asparagine glycan is attached at Asn237. Residue Asn298 is glycosylated (N-linked (GlcNAc...) asparagine). 2 disulfides stabilise this stretch: Cys315–Cys323 and Cys353–Cys361. LRR repeat units lie at residues 363–386 (GTDI…RFAD), 387–410 (FASL…ELAK), and 411–438 (LSNL…IVNT). N-linked (GlcNAc...) asparagine glycosylation is found at Asn377, Asn394, Asn401, Asn432, and Asn437. Residues 461 to 481 (IVGSVIGILLALLLIGVAIFF) form a helical membrane-spanning segment. Topologically, residues 482–886 (LVKKKMQYHK…ESTFKSGQGR (405 aa)) are cytoplasmic. The Protein kinase domain maps to 547–827 (FDEKNILGRG…HVVNVLVSLV (281 aa)). Residues 553 to 561 (LGRGGFGIV) and Lys575 each bind ATP. The active-site Proton acceptor is Asp676.

Belongs to the protein kinase superfamily. Ser/Thr protein kinase family. Expressed in siliques and flowers.

It is found in the membrane. The enzyme catalyses L-seryl-[protein] + ATP = O-phospho-L-seryl-[protein] + ADP + H(+). It catalyses the reaction L-threonyl-[protein] + ATP = O-phospho-L-threonyl-[protein] + ADP + H(+). Involved in auxin signal transduction and cell expansion and proliferation regulation. This Arabidopsis thaliana (Mouse-ear cress) protein is Receptor-like kinase TMK2.